We begin with the raw amino-acid sequence, 498 residues long: Protein flp (498 aa).

4 helical membrane passes run 6 to 26 (LYFL…IYIT), 389 to 409 (FNIV…FSAY), 433 to 453 (LSLC…YLIL), and 471 to 491 (LALI…LLFL).

It localises to the cell membrane. Functionally, its precise function is unknown. Has no penicillin-binding activity and is not involved in methicillin resistance. The chain is Protein flp (flp) from Staphylococcus aureus (strain NCTC 8325 / PS 47).